A 408-amino-acid chain; its full sequence is UDP-N-acetylglucosamine--N-acetylmuramyl-(pentapeptide) pyrophosphoryl-undecaprenol N-acetylglucosamine transferase (408 aa).

Positions 1–20 (MNDTVKKPTGGRGDDPLPAG) are disordered. UDP-N-acetyl-alpha-D-glucosamine contacts are provided by residues 41–43 (TAG), Asn-160, Arg-197, Ser-231, and Gln-327.

It belongs to the glycosyltransferase 28 family. MurG subfamily.

It localises to the cell membrane. It catalyses the reaction di-trans,octa-cis-undecaprenyl diphospho-N-acetyl-alpha-D-muramoyl-L-alanyl-D-glutamyl-meso-2,6-diaminopimeloyl-D-alanyl-D-alanine + UDP-N-acetyl-alpha-D-glucosamine = di-trans,octa-cis-undecaprenyl diphospho-[N-acetyl-alpha-D-glucosaminyl-(1-&gt;4)]-N-acetyl-alpha-D-muramoyl-L-alanyl-D-glutamyl-meso-2,6-diaminopimeloyl-D-alanyl-D-alanine + UDP + H(+). It participates in cell wall biogenesis; peptidoglycan biosynthesis. Functionally, cell wall formation. Catalyzes the transfer of a GlcNAc subunit on undecaprenyl-pyrophosphoryl-MurNAc-pentapeptide (lipid intermediate I) to form undecaprenyl-pyrophosphoryl-MurNAc-(pentapeptide)GlcNAc (lipid intermediate II). In Mycolicibacterium paratuberculosis (strain ATCC BAA-968 / K-10) (Mycobacterium paratuberculosis), this protein is UDP-N-acetylglucosamine--N-acetylmuramyl-(pentapeptide) pyrophosphoryl-undecaprenol N-acetylglucosamine transferase.